A 584-amino-acid chain; its full sequence is Endogenous retrovirus group FC1 Env polyprotein (584 aa).

The N-terminal stretch at 1 to 22 (MARPSPLCLLLLLTLLTPIVPS) is a signal peptide. Residues 23–518 (NSLLTEPPFR…GWWQSPLTTW (496 aa)) lie on the Extracellular side of the membrane. Asparagine 69 and asparagine 247 each carry an N-linked (GlcNAc...) asparagine glycan. The CXXC motif lies at 251–254 (CFLC). N-linked (GlcNAc...) asparagine glycosylation is found at asparagine 272, asparagine 276, asparagine 308, asparagine 313, asparagine 322, asparagine 334, asparagine 342, and asparagine 346. Residues 384–404 (AVFPPLVIGVSLTSSLVASGL) form a fusion peptide region. A CKS-17 motif is present at residues 449-465 (MQNRRALDLLTADKGGT). A disulfide bridge connects residues cysteine 466 and cysteine 473. Positions 466–474 (CMFLGEECC) match the CX6CC motif. Asparagine 478 carries N-linked (GlcNAc...) asparagine glycosylation. A helical membrane pass occupies residues 519–539 (IIPFISPILIICLLLLIAPCV). The Cytoplasmic portion of the chain corresponds to 540–584 (LKFIKNRISEVSRVTVNQMLLHPYSRLPTSEDHYDDALTQQEAAR).

The protein belongs to the gamma type-C retroviral envelope protein family. HERV class-I F(c)1 env subfamily. As to quaternary structure, the surface (SU) and transmembrane (TM) proteins form a heterodimer. SU and TM are attached by noncovalent interactions or by a labile interchain disulfide bond. Post-translationally, specific enzymatic cleavages in vivo yield the mature SU and TM proteins. In terms of processing, the CXXC motif is highly conserved across a broad range of retroviral envelope proteins. It is thought to participate in the formation of a labile disulfide bond possibly with the CX6CC motif present in the transmembrane protein. As to expression, low expression in skin, testis and trachea.

The protein localises to the virion. It is found in the cell membrane. Its function is as follows. Retroviral envelope proteins mediate receptor recognition and membrane fusion during early infection. Endogenous envelope proteins may have kept, lost or modified their original function during evolution. This endogenous envelope protein has lost its original fusogenic properties. Functionally, SU mediates receptor recognition. TM anchors the envelope heterodimer to the viral membrane through one transmembrane domain. The other hydrophobic domain, called fusion peptide, mediates fusion of the viral membrane with the target cell membrane. The sequence is that of Endogenous retrovirus group FC1 Env polyprotein (ERVFC1) from Homo sapiens (Human).